We begin with the raw amino-acid sequence, 315 residues long: ATP synthase gamma chain (315 aa).

The protein belongs to the ATPase gamma chain family. F-type ATPases have 2 components, CF(1) - the catalytic core - and CF(0) - the membrane proton channel. CF(1) has five subunits: alpha(3), beta(3), gamma(1), delta(1), epsilon(1). CF(0) has three main subunits: a, b and c.

It localises to the cellular thylakoid membrane. Its function is as follows. Produces ATP from ADP in the presence of a proton gradient across the membrane. The gamma chain is believed to be important in regulating ATPase activity and the flow of protons through the CF(0) complex. The chain is ATP synthase gamma chain from Cyanothece sp. (strain PCC 7425 / ATCC 29141).